The sequence spans 218 residues: Alkylmercury lyase (218 aa).

This sequence belongs to the MerB family.

The catalysed reaction is an alkylmercury + H(+) = an alkane + Hg(2+). Its function is as follows. Cleaves the carbon-mercury bond of organomercurials such as phenylmercuric acetate. One product is Hg(2+), which is subsequently detoxified by the mercuric reductase. In Clostridium butyricum, this protein is Alkylmercury lyase.